We begin with the raw amino-acid sequence, 759 residues long: GTPase-activating protein rrc-1 (759 aa).

Residues Pro164–Asp243 form the SH3 domain. In terms of domain architecture, Rho-GAP spans Leu280–Phe473. Positions Ala591 to Glu624 are disordered. Residues Ser612–Leu622 are compositionally biased toward polar residues.

Expressed in coelomocytes, excretory cells, uterine-seam cells and GLR cells.

Its function is as follows. Functions as a GTPase-activating protein (GAP) for ced-10/rac-1 and CDC42. The chain is GTPase-activating protein rrc-1 (rrc-1) from Caenorhabditis elegans.